Here is a 419-residue protein sequence, read N- to C-terminus: Acetylornithine aminotransferase (419 aa).

Residues 116-117 (GA) and Phe149 each bind pyridoxal 5'-phosphate. Arg152 is a binding site for N(2)-acetyl-L-ornithine. Position 240–243 (240–243 (DEVQ)) interacts with pyridoxal 5'-phosphate. The residue at position 269 (Lys269) is an N6-(pyridoxal phosphate)lysine. Residue Ser296 coordinates N(2)-acetyl-L-ornithine. Thr297 is a binding site for pyridoxal 5'-phosphate.

Belongs to the class-III pyridoxal-phosphate-dependent aminotransferase family. ArgD subfamily. Homodimer. Pyridoxal 5'-phosphate serves as cofactor.

It localises to the cytoplasm. The enzyme catalyses N(2)-acetyl-L-ornithine + 2-oxoglutarate = N-acetyl-L-glutamate 5-semialdehyde + L-glutamate. It participates in amino-acid biosynthesis; L-arginine biosynthesis; N(2)-acetyl-L-ornithine from L-glutamate: step 4/4. The sequence is that of Acetylornithine aminotransferase from Prochlorococcus marinus (strain SARG / CCMP1375 / SS120).